A 315-amino-acid chain; its full sequence is Small ribosomal subunit biogenesis GTPase RsgA (315 aa).

In terms of domain architecture, CP-type G spans 79–243 (LSKESHILGA…LIDTPGIKGF (165 aa)). GTP-binding positions include 128-131 (NKID) and 182-190 (GHSGVGKSS). Positions 267, 272, 274, and 280 each coordinate Zn(2+).

It belongs to the TRAFAC class YlqF/YawG GTPase family. RsgA subfamily. In terms of assembly, monomer. Associates with 30S ribosomal subunit, binds 16S rRNA. The cofactor is Zn(2+).

Its subcellular location is the cytoplasm. In terms of biological role, one of several proteins that assist in the late maturation steps of the functional core of the 30S ribosomal subunit. Helps release RbfA from mature subunits. May play a role in the assembly of ribosomal proteins into the subunit. Circularly permuted GTPase that catalyzes slow GTP hydrolysis, GTPase activity is stimulated by the 30S ribosomal subunit. In Porphyromonas gingivalis (strain ATCC BAA-308 / W83), this protein is Small ribosomal subunit biogenesis GTPase RsgA.